Reading from the N-terminus, the 550-residue chain is Urocanate hydratase (550 aa).

NAD(+) contacts are provided by residues 48–49, Gln126, 172–174, Glu192, Arg197, 238–239, 259–263, 268–269, and Tyr317; these read GG, GMG, NA, QTSAH, and YL. Cys405 is an active-site residue. Residue Gly487 coordinates NAD(+).

The protein belongs to the urocanase family. Requires NAD(+) as cofactor.

It localises to the cytoplasm. The catalysed reaction is 4-imidazolone-5-propanoate = trans-urocanate + H2O. It participates in amino-acid degradation; L-histidine degradation into L-glutamate; N-formimidoyl-L-glutamate from L-histidine: step 2/3. Its function is as follows. Catalyzes the conversion of urocanate to 4-imidazolone-5-propionate. The chain is Urocanate hydratase from Saccharopolyspora erythraea (strain ATCC 11635 / DSM 40517 / JCM 4748 / NBRC 13426 / NCIMB 8594 / NRRL 2338).